Reading from the N-terminus, the 157-residue chain is GTP-dependent dephospho-CoA kinase (157 aa).

Positions 40, 59, 61, 107, and 128 each coordinate GTP.

It belongs to the GTP-dependent DPCK family.

It catalyses the reaction 3'-dephospho-CoA + GTP = GDP + CoA + H(+). It functions in the pathway cofactor biosynthesis; coenzyme A biosynthesis. Functionally, catalyzes the GTP-dependent phosphorylation of the 3'-hydroxyl group of dephosphocoenzyme A to form coenzyme A (CoA). This Desulfurococcus amylolyticus (strain DSM 18924 / JCM 16383 / VKM B-2413 / 1221n) (Desulfurococcus kamchatkensis) protein is GTP-dependent dephospho-CoA kinase.